Consider the following 428-residue polypeptide: D-amino acid dehydrogenase (428 aa).

Residue 3–17 participates in FAD binding; that stretch reads VVILGSGVVGVASAY.

It belongs to the DadA oxidoreductase family. The cofactor is FAD.

The enzyme catalyses a D-alpha-amino acid + A + H2O = a 2-oxocarboxylate + AH2 + NH4(+). Its pathway is amino-acid degradation; D-alanine degradation; NH(3) and pyruvate from D-alanine: step 1/1. In terms of biological role, oxidative deamination of D-amino acids. The chain is D-amino acid dehydrogenase from Burkholderia lata (strain ATCC 17760 / DSM 23089 / LMG 22485 / NCIMB 9086 / R18194 / 383).